The sequence spans 117 residues: MKFFWVSSLLGLLGLSTAIPLSTEADALLDRKTIYFGMKAYDDVNCKGSTSYTISFNKCQAYPNINSINALTDGAVCTVYVYSSNNCTGEPVFQTDSDGIECINVDAFETGSWKFKC.

The signal sequence occupies residues 1 to 18 (MKFFWVSSLLGLLGLSTA). N-linked (GlcNAc...) asparagine glycosylation occurs at asparagine 86.

This is an uncharacterized protein from Schizosaccharomyces pombe (strain 972 / ATCC 24843) (Fission yeast).